The chain runs to 157 residues: Putative tRNA (cytidine(34)-2'-O)-methyltransferase (157 aa).

S-adenosyl-L-methionine is bound by residues isoleucine 79, glycine 104, and isoleucine 125.

Belongs to the class IV-like SAM-binding methyltransferase superfamily. RNA methyltransferase TrmH family. TrmL subfamily.

It localises to the cytoplasm. It carries out the reaction cytidine(34) in tRNA + S-adenosyl-L-methionine = 2'-O-methylcytidine(34) in tRNA + S-adenosyl-L-homocysteine + H(+). The catalysed reaction is 5-carboxymethylaminomethyluridine(34) in tRNA(Leu) + S-adenosyl-L-methionine = 5-carboxymethylaminomethyl-2'-O-methyluridine(34) in tRNA(Leu) + S-adenosyl-L-homocysteine + H(+). Functionally, could methylate the ribose at the nucleotide 34 wobble position in tRNA. The protein is Putative tRNA (cytidine(34)-2'-O)-methyltransferase of Geobacillus stearothermophilus (Bacillus stearothermophilus).